Reading from the N-terminus, the 1335-residue chain is Regulatory-associated protein of mTOR (1335 aa).

Phosphoserine is present on residues S44 and S122. S696 carries the phosphoserine; by MAPK8 modification. T700 carries O-linked (GlcNAc) threonine glycosylation. T706 is modified (phosphothreonine; by MAPK8). A phosphoserine; by RPS6KA1 mark is found at S719 and S721. Residue S722 is modified to Phosphoserine; by AMPK and RPS6KA1. S738 is modified (phosphoserine). Positions 749-771 are disordered; it reads GSSVAFSPGNLSTSSSASSTLGS. The segment covering 755–771 has biased composition (low complexity); the sequence is SPGNLSTSSSASSTLGS. S791 carries the post-translational modification Phosphoserine. Residue S792 is modified to Phosphoserine; by AMPK. Phosphoserine occurs at positions 836 and 855. The segment covering 853 to 866 has biased composition (polar residues); that stretch reads TSSLTQSAPASPTN. Residues 853–942 form a disordered region; sequence TSSLTQSAPA…GPDQTTDDAD (90 aa). The residue at position 859 (S859) is a Phosphoserine; by MTOR. S863 carries the phosphoserine; by MAPK8, MTOR and NLK modification. Residue T865 is modified to Phosphothreonine. A Phosphoserine modification is found at S877. The segment covering 877–887 has biased composition (low complexity); that stretch reads SPPASSTSSCS. Residues 888–898 show a composition bias toward polar residues; that stretch reads LTNDVAKQTVS. Residues K932 and K948 each participate in a glycyl lysine isopeptide (Lys-Gly) (interchain with G-Cter in ubiquitin) cross-link. At S982 the chain carries Phosphoserine. WD repeat units follow at residues 1020 to 1061, 1065 to 1106, 1121 to 1160, 1164 to 1203, 1209 to 1249, 1251 to 1291, and 1299 to 1335; these read NRNP…DYFH, PRYT…EKNP, TTRG…KVQD, GADS…SECR, EHTA…SVNV, QIVK…NNIK, and QRVG…KRVR. The residue at position 1097 (K1097) is an N6-acetyllysine.

It belongs to the WD repeat RAPTOR family. As to quaternary structure, part of the mechanistic target of rapamycin complex 1 (mTORC1) which contains MTOR, MLST8 and RPTOR. mTORC1 associates with AKT1S1/PRAS40, which inhibits its activity. mTORC1 associates with DEPTOR, which regulates its activity. mTORC1 binds to and is inhibited by FKBP12-rapamycin. Forms a complex with MTOR under both leucine-rich and -poor conditions. Interacts with (via TOS motifs) EIF4EBP1 and RPS6KB1; interaction is independent of its association with MTOR. Binds preferentially to poorly or non-phosphorylated forms of EIF4EBP1, and this binding is critical to the ability of MTOR to catalyze phosphorylation. Interacts with ULK1 in a nutrient-dependent manner; the interaction is reduced during starvation. Interacts with GTP-bound form of RagA/RRAGA or RagB/RRAGB and GDP-bound form of RagC/RRAGC or RagD/RRAGD, promoting recruitment of mTORC1 to the lysosomes. Interacts (when phosphorylated by AMPK) with 14-3-3 protein, leading to inhibition of its activity. Interacts with SPAG5; SPAG5 competes with MTOR for RPTOR-binding, resulting in decreased mTORC1 formation. Interacts with WAC; WAC positively regulates MTOR activity by promoting the assembly of the TTT complex composed of TELO2, TTI1 and TTI2 and the RUVBL complex composed of RUVBL1 and RUVBL2 into the TTT-RUVBL complex which leads to the dimerization of the mTORC1 complex and its subsequent activation. Interacts with G3BP1. The complex formed with G3BP1 and SPAG5 is increased by oxidative stress. Interacts with HTR6. Interacts with PIH1D1. Interacts with LARP1. Interacts with BRAT1. Interacts with SIK3. Interacts with SLC38A7; this interaction mediates the recruitment of mTORC1 to the lysosome and its subsequent activation. In terms of processing, insulin-stimulated phosphorylation at Ser-863 by MTOR and MAPK8 regulates mTORC1 activity. Phosphorylated at Ser-863 by NLK in response to stress, disrupting the interaction with small GTPases Rag (RagA/RRAGA, RagB/RRAGB, RagC/RRAGC and/or RagD/RRAGD), thereby preventing lysosome recruitment and activation of the mTORC1 complex. Osmotic stress also induces phosphorylation at Ser-696, Thr-706 and Ser-863 by MAPK8. Ser-863 phosphorylation is required for phosphorylation at Ser-855 and Ser-859. In response to nutrient limitation, phosphorylated at Ser-722 and Ser-792 by AMPK; phosphorylation promotes interaction with 14-3-3 proteins, leading to negative regulation of the mTORC1 complex. Phosphorylation at Ser-722 and Ser-792 by AMPK in response to glucose starvation inhibits O-GlcNAcylation by OGT and subsequent activation of mTORC1. In response to growth factors, phosphorylated at Ser-719, Ser-721 and Ser-722 by RPS6KA1, which stimulates mTORC1 activity. Phosphorylation at Ser-791 by PKA downstream of cAMP inhibits the mTORC1 complex. Phosphorylated at Ser-877 by TBK1, leading to negative regulation of the mTORC1 complex. O-GlcNAcylated by OGT upon glucose sufficiency, promoting interaction with small GTPases Rag (RagA/RRAGA, RagB/RRAGB, RagC/RRAGC and/or RagD/RRAGD) and subsequent recruitment of mTORC1 to lysosomal membranes, leading to activation of the mTORC1 complex. Phosphorylation at Ser-722 and Ser-792 by AMPK in response to glucose starvation inhibits O-GlcNAcylation. Post-translationally, acetylation at Lys-1097 by EP300/p300 in response to leucine metabolite acetyl-coA promotes its activity, leading to activation of the mTORC1 complex. Acetylation is decreased in response to fasting. Phosphorylated at Ser-877 by TBK1, leading to negative regulation of the mTORC1 complex. In terms of processing, ubiquitinated, leading to its degradation by the proteasome. Deubiquitinated by OTUB1 via a non-catalytic mechanism. Ubiquitinated by an E3 ubiquitin ligase complex containing VHL.

It localises to the cytoplasm. It is found in the lysosome. The protein resides in the cytoplasmic granule. In terms of biological role, component of the mechanistic target of rapamycin complex 1 (mTORC1), an evolutionarily conserved central nutrient sensor that stimulates anabolic reactions and macromolecule biosynthesis to promote cellular biomass generation and growth. In response to nutrients, growth factors or amino acids, mTORC1 is recruited to the lysosome membrane and promotes protein, lipid and nucleotide synthesis by phosphorylating several substrates, such as ribosomal protein S6 kinase (RPS6KB1 and RPS6KB2) and EIF4EBP1 (4E-BP1). In the same time, it inhibits catabolic pathways by phosphorylating the autophagy initiation components ULK1 and ATG13, as well as transcription factor TFEB, a master regulators of lysosomal biogenesis and autophagy. The mTORC1 complex is inhibited in response to starvation and amino acid depletion. Within the mTORC1 complex, RPTOR acts both as a molecular adapter, which (1) mediates recruitment of mTORC1 to lysosomal membranes via interaction with small GTPases Rag (RagA/RRAGA, RagB/RRAGB, RagC/RRAGC and/or RagD/RRAGD), and a (2) substrate-specific adapter, which promotes substrate specificity by binding to TOS motif-containing proteins and direct them towards the active site of the MTOR kinase domain for phosphorylation. mTORC1 complex regulates many cellular processes, such as odontoblast and osteoclast differentiation or neuronal transmission. mTORC1 complex in excitatory neuronal transmission is required for the prosocial behavior induced by the psychoactive substance lysergic acid diethylamide (LSD). In Mus musculus (Mouse), this protein is Regulatory-associated protein of mTOR.